Consider the following 265-residue polypeptide: Thiazole synthase (265 aa).

Lys103 acts as the Schiff-base intermediate with DXP in catalysis. 1-deoxy-D-xylulose 5-phosphate-binding positions include Gly164, 190-191 (AG), and 212-213 (NT).

The protein belongs to the ThiG family. In terms of assembly, homotetramer. Forms heterodimers with either ThiH or ThiS.

The protein localises to the cytoplasm. It catalyses the reaction [ThiS sulfur-carrier protein]-C-terminal-Gly-aminoethanethioate + 2-iminoacetate + 1-deoxy-D-xylulose 5-phosphate = [ThiS sulfur-carrier protein]-C-terminal Gly-Gly + 2-[(2R,5Z)-2-carboxy-4-methylthiazol-5(2H)-ylidene]ethyl phosphate + 2 H2O + H(+). It participates in cofactor biosynthesis; thiamine diphosphate biosynthesis. Its function is as follows. Catalyzes the rearrangement of 1-deoxy-D-xylulose 5-phosphate (DXP) to produce the thiazole phosphate moiety of thiamine. Sulfur is provided by the thiocarboxylate moiety of the carrier protein ThiS. In vitro, sulfur can be provided by H(2)S. In Bordetella pertussis (strain Tohama I / ATCC BAA-589 / NCTC 13251), this protein is Thiazole synthase.